A 157-amino-acid chain; its full sequence is Selenoprotein F (157 aa).

An N-terminal signal peptide occupies residues 1–19 (MSGEVYILWLLSLIQTLSA). A non-standard amino acid (selenocysteine) is located at residue Sec-84.

This sequence belongs to the selenoprotein M/F family. As to expression, expressed in the brain, liver and retina. Localized to the retinal ganglion cell layer, the inner nuclear layer and the outer nuclear layer at both parr and smolt stages.

The protein localises to the endoplasmic reticulum lumen. Its function is as follows. May be involved in redox reactions associated with the formation of disulfide bonds. May contribute to the quality control of protein folding in the endoplasmic reticulum. May be involved in retinal development. The protein is Selenoprotein F of Oncorhynchus mykiss (Rainbow trout).